The chain runs to 292 residues: Elongation factor Ts (292 aa).

The segment at 80-83 (TDFV) is involved in Mg(2+) ion dislocation from EF-Tu.

Belongs to the EF-Ts family.

It is found in the cytoplasm. In terms of biological role, associates with the EF-Tu.GDP complex and induces the exchange of GDP to GTP. It remains bound to the aminoacyl-tRNA.EF-Tu.GTP complex up to the GTP hydrolysis stage on the ribosome. This is Elongation factor Ts from Psychrobacter sp. (strain PRwf-1).